The following is a 1786-amino-acid chain: Laminin subunit beta-1 (1786 aa).

An N-terminal signal peptide occupies residues 1 to 21 (MGLLQVFAFGVLALWGTRVCA). Residues 31 to 270 (AEGSCYPATG…AVYDMVVRGN (240 aa)) form the Laminin N-terminal domain. A glycan (N-linked (GlcNAc...) asparagine) is linked at Asn-120. Ser-250 is subject to Phosphoserine. Cystine bridges form between Cys-271-Cys-280, Cys-273-Cys-298, Cys-300-Cys-309, Cys-312-Cys-332, Cys-335-Cys-344, Cys-337-Cys-362, Cys-365-Cys-374, Cys-377-Cys-395, Cys-398-Cys-411, Cys-400-Cys-426, Cys-428-Cys-437, Cys-440-Cys-455, Cys-458-Cys-472, Cys-460-Cys-479, Cys-481-Cys-490, Cys-493-Cys-507, Cys-510-Cys-522, Cys-512-Cys-529, and Cys-531-Cys-540. Laminin EGF-like domains follow at residues 271-334 (CFCY…ACKK), 335-397 (CNCN…LCEP), 398-457 (CTCD…GCKS), and 458-509 (CACN…GCRP). N-linked (GlcNAc...) asparagine glycosylation is present at Asn-356. Residues 510 to 540 (CDCDLGGALNNSCSEDSGQCSCLPHMIGRQC) form the Laminin EGF-like 5; truncated domain. N-linked (GlcNAc...) asparagine glycosylation occurs at Asn-519. Residues 549 to 767 (FTTLDHYIYE…IIFSISALIH (219 aa)) form the Laminin IV type B domain. An N-linked (GlcNAc...) asparagine glycan is attached at Asn-677. Disulfide bonds link Cys-773/Cys-785, Cys-775/Cys-792, Cys-794/Cys-803, Cys-806/Cys-818, Cys-821/Cys-833, Cys-823/Cys-840, Cys-842/Cys-851, Cys-854/Cys-864, Cys-867/Cys-876, Cys-869/Cys-883, Cys-886/Cys-895, Cys-898/Cys-914, Cys-917/Cys-933, Cys-919/Cys-944, Cys-946/Cys-955, Cys-958/Cys-973, Cys-976/Cys-990, Cys-978/Cys-997, Cys-1000/Cys-1009, Cys-1012/Cys-1025, Cys-1028/Cys-1040, Cys-1030/Cys-1054, Cys-1056/Cys-1065, Cys-1068/Cys-1081, Cys-1084/Cys-1096, Cys-1086/Cys-1103, Cys-1105/Cys-1114, Cys-1117/Cys-1129, Cys-1132/Cys-1144, Cys-1134/Cys-1151, Cys-1153/Cys-1162, and Cys-1165/Cys-1176. Laminin EGF-like domains lie at 773 to 820 (CECD…GCKP), 821 to 866 (CDCH…SCQP), 867 to 916 (CQCN…HCRP), 917 to 975 (CPCP…SCQP), 976 to 1027 (CQCH…DCRK), 1028 to 1083 (CVCN…GCGP), 1084 to 1131 (CNCN…ECRA), and 1132 to 1178 (CDCD…DCTP). N-linked (GlcNAc...) asparagine glycosylation occurs at Asn-1041. The domain II stretch occupies residues 1179–1397 (CHQCFALWDA…LDLSAVAQMT (219 aa)). Asn-1195, Asn-1279, Asn-1336, and Asn-1343 each carry an N-linked (GlcNAc...) asparagine glycan. The stretch at 1216–1315 (YRETVDSVEK…LEFIKNSDIQ (100 aa)) forms a coiled coil. Residues 1368-1388 (KEQQEEQARLLDELAGKLQSL) are a coiled coil. A domain alpha region spans residues 1398–1430 (CGTPPGADCSESECGGPNCRTDEGEKKCGGPGC). The segment at 1431-1786 (GGLVTVAHSA…EKVAVYSTCL (356 aa)) is domain I. Residues 1448–1778 (DRDVLSALAE…RSLLKDISEK (331 aa)) are a coiled coil. The N-linked (GlcNAc...) asparagine glycan is linked to Asn-1487. Residue Ser-1496 is modified to Phosphoserine. Asn-1542 and Asn-1643 each carry an N-linked (GlcNAc...) asparagine glycan. Position 1666 is a phosphoserine (Ser-1666).

In terms of assembly, laminin is a complex glycoprotein, consisting of three different polypeptide chains (alpha, beta, gamma), which are bound to each other by disulfide bonds into a cross-shaped molecule comprising one long and three short arms with globules at each end. Beta-1 is a subunit of laminin-1 (laminin-111 or EHS laminin), laminin-2 (laminin-211 or merosin), laminin-6 (laminin-311 or K-laminin), laminin-8 (laminin-411), laminin-10 (laminin-511) and laminin-12 (laminin-213). Interacts with ITGB1. In terms of tissue distribution, widely expressed in the embryo. High levels are detected in the cerebellar basement membrane, at postnatal day 7.

The protein resides in the secreted. Its subcellular location is the extracellular space. The protein localises to the extracellular matrix. It localises to the basement membrane. In terms of biological role, binding to cells via a high affinity receptor, laminin is thought to mediate the attachment, migration and organization of cells into tissues during embryonic development by interacting with other extracellular matrix components. Involved in the organization of the laminar architecture of the cerebral cortex. It is probably required for the integrity of the basement membrane/glia limitans that serves as an anchor point for the endfeet of radial glial cells and as a physical barrier to migrating neurons. Radial glial cells play a central role in cerebral cortical development, where they act both as the proliferative unit of the cerebral cortex and a scaffold for neurons migrating toward the pial surface. This Mus musculus (Mouse) protein is Laminin subunit beta-1 (Lamb1).